The primary structure comprises 118 residues: Small ribosomal subunit protein uS13 (118 aa).

The segment at 94-118 (GLPVRGQRTKTNARTRKGPRKPIKK) is disordered.

Belongs to the universal ribosomal protein uS13 family. In terms of assembly, part of the 30S ribosomal subunit. Forms a loose heterodimer with protein S19. Forms two bridges to the 50S subunit in the 70S ribosome.

Functionally, located at the top of the head of the 30S subunit, it contacts several helices of the 16S rRNA. In the 70S ribosome it contacts the 23S rRNA (bridge B1a) and protein L5 of the 50S subunit (bridge B1b), connecting the 2 subunits; these bridges are implicated in subunit movement. Contacts the tRNAs in the A and P-sites. The polypeptide is Small ribosomal subunit protein uS13 (Shigella dysenteriae serotype 1 (strain Sd197)).